A 149-amino-acid chain; its full sequence is Large ribosomal subunit protein bL17 (149 aa).

It belongs to the bacterial ribosomal protein bL17 family. Part of the 50S ribosomal subunit. Contacts protein L32.

This Kosmotoga olearia (strain ATCC BAA-1733 / DSM 21960 / TBF 19.5.1) protein is Large ribosomal subunit protein bL17.